Here is a 368-residue protein sequence, read N- to C-terminus: Glutamate 5-kinase 1 (368 aa).

Lys12 lines the ATP pocket. Substrate contacts are provided by Ser52, Asp135, and Asn147. Residues 167 to 168 (SD) and 209 to 215 (TGGMKTK) contribute to the ATP site. A PUA domain is found at 274–348 (QGEVVVDGSF…DNEQSEFSEK (75 aa)).

The protein belongs to the glutamate 5-kinase family.

Its subcellular location is the cytoplasm. It catalyses the reaction L-glutamate + ATP = L-glutamyl 5-phosphate + ADP. It participates in amino-acid biosynthesis; L-proline biosynthesis; L-glutamate 5-semialdehyde from L-glutamate: step 1/2. Catalyzes the transfer of a phosphate group to glutamate to form L-glutamate 5-phosphate. In Pseudoalteromonas translucida (strain TAC 125), this protein is Glutamate 5-kinase 1.